We begin with the raw amino-acid sequence, 161 residues long: uncharacterized protein (161 aa).

Residues 5 to 25 (GPTLLSLLAALLVSLGLLLWY) traverse the membrane as a helical segment.

The protein belongs to the IIV-6 203L/325L family.

The protein resides in the membrane. This is an uncharacterized protein from Invertebrate iridescent virus 3 (IIV-3).